The sequence spans 583 residues: Ribonuclease ZC3H12A (583 aa).

Basic and acidic residues predominate over residues 1–11 (MSLWELEDRRS). Disordered stretches follow at residues 1–29 (MSLWELEDRRSCQGTPRPAQEPTAEEATT) and 73–119 (GSAA…GSDL). The span at 15–29 (TPRPAQEPTAEEATT) shows a compositional bias: low complexity. A ubiquitin association domain region spans residues 26 to 71 (EATTAELQMKVDFFRKLGYSSAEIHSVLQKLGIQADTNTVLGELVK). The tract at residues 65-134 (VLGELVKHGS…DGSNVAMSHG (70 aa)) is necessary for interaction with TANK. The span at 73-82 (GSAAERERQA) shows a compositional bias: basic and acidic residues. S83 is modified (phosphoserine). Residues 96–281 (GGGTPKAPTV…LDNFLRKKPL (186 aa)) form an RNase region. One can recognise an RNase NYN domain in the interval 119-274 (LRPIVIDGSN…LGRHGPSLDN (156 aa)). Residues 198 to 204 (RRVGGKR) are RNA binding. D210 lines the Mg(2+) pocket. Disordered stretches follow at residues 262–290 (DDPLGRHGPSLDNFLRKKPLTSEHKKQPC) and 323–404 (ANAL…PSEW). A C3H1-type zinc finger spans residues 284 to 309 (EHKKQPCPYGRKCTYGIKCRFLHPER). A necessary for interaction with ZC3H12D region spans residues 285–441 (HKKQPCPYGR…SELWGVRGGG (157 aa)). Over residues 341–352 (RPSPSSQPGSLP) the composition is skewed to low complexity. Residues 353 to 364 (TEHEQCSPDRKK) are compositionally biased toward basic and acidic residues. The segment covering 384 to 393 (PTGRSLPPSG) has biased composition (low complexity). S422 and S426 each carry phosphoserine. The disordered stretch occupies residues 503-530 (YQLPPPTQRLQEPQAPGPGADRGPWGGA).

Belongs to the ZC3H12 family. Oligomer. Found in a deubiquitination complex with TANK, USP10 and ZC3H12A; this complex inhibits genotoxic stress- or interleukin-1-beta-mediated NF-kappaB activation by promoting IKBKG or TRAF6 deubiquitination. Interacts with IKBKG; this interaction increases in response to DNA damage. Interacts with TANK; this interaction increases in response to DNA damage and serves as a bridge to anchor both TANK and USP10 into a deubiquitinating complex. Interacts with TRAF6; this interaction increases in response to DNA damage and is stimulated by TANK. Interacts with USP10; this interaction increases in response to DNA damage and serves as a bridge to anchor both TANK and USP10 into a deubiquitinating complex. Interacts with ZC3H12D. Interacts with TNRC6A. Interacts with IKBKB/IKKB. Interacts with IKBKB/IKKB. Interacts with BTRC; the interaction occurs when ZC3H12A is phosphorylated in a IKBKB/IKKB-dependent manner. Interacts with IRAK1; this interaction increases the interaction between ZC3H12A and IKBKB/IKKB. Interacts with UPF1; this interaction occurs in a mRNA translationally active- and termination-dependent manner and is essential for ZC3H12A-mediated degradation of target mRNAs. Associates with ribosomes. Interacts with ubiquitin. Mg(2+) serves as cofactor. Phosphorylated by IRAK1; phosphorylation is necessary for subsequent phosphorylation by the I-kappa-B-kinase (IKK) complex. Phosphorylated by I-kappa-B-kinase (IKK) subunits IKBKB/IKKB and CHUK/IKKA at Ser-422 and Ser-426; these phosphorylations promote ubiquitin proteasome-mediated degradation of ZC3H12A and hence facilitates rapid and robust production of IL-6 mRNA in response to toll-like receptor (TLR) or IL-1 receptor stimuli. Post-translationally, ubiquitinated; ubiquitination is induced in response to interleukin IL1 receptor stimuli in a IKBKB/IKKB and IRAK1-dependent manner, leading to proteasome-mediated degradation. In terms of processing, proteolytically cleaved between Arg-95 and Arg-198 by MALT1 in activated T-cells; cleavage at Arg-95 is critical for promoting ZC3H12A degradation in response to T-cell receptor (TCR) stimulation, and hence is necessary for prolonging the stability of a set of mRNAs controlling T-cell activation and Th17 cell differentiation.

It is found in the nucleus. It localises to the cytoplasm. Its subcellular location is the P-body. The protein localises to the rough endoplasmic reticulum membrane. The protein resides in the cytoplasmic granule. Functionally, endoribonuclease involved in various biological functions such as cellular inflammatory response and immune homeostasis, glial differentiation of neuroprogenitor cells, cell death of cardiomyocytes, adipogenesis and angiogenesis. Functions as an endoribonuclease involved in mRNA decay. Modulates the inflammatory response by promoting the degradation of a set of translationally active cytokine-induced inflammation-related mRNAs, such as IL6 and IL12B, during the early phase of inflammation. Prevents aberrant T-cell-mediated immune reaction by degradation of multiple mRNAs controlling T-cell activation, such as those encoding cytokines (IL6 and IL2), cell surface receptors (ICOS, TNFRSF4 and TNFR2) and transcription factor (REL). Inhibits cooperatively with ZC3H12A the differentiation of helper T cells Th17 in lungs. They repress target mRNA encoding the Th17 cell-promoting factors IL6, ICOS, REL, IRF4, NFKBID and NFKBIZ. The cooperation requires RNA-binding by RC3H1 and the nuclease activity of ZC3H12A. Together with RC3H1, destabilizes TNFRSF4/OX40 mRNA by binding to the conserved stem loop structure in its 3'UTR. Self regulates by destabilizing its own mRNA. Cleaves mRNA harboring a stem-loop (SL), often located in their 3'-UTRs, during the early phase of inflammation in a helicase UPF1-dependent manner. Plays a role in the inhibition of microRNAs (miRNAs) biogenesis. Cleaves the terminal loop of a set of precursor miRNAs (pre-miRNAs) important for the regulation of the inflammatory response leading to their degradation, and thus preventing the biosynthesis of mature miRNAs. Also plays a role in promoting angiogenesis in response to inflammatory cytokines by inhibiting the production of antiangiogenic microRNAs via its anti-dicer RNase activity. Affects the overall ubiquitination of cellular proteins. Positively regulates deubiquitinase activity promoting the cleavage at 'Lys-48'- and 'Lys-63'-linked polyubiquitin chains on TNF receptor-associated factors (TRAFs), preventing JNK and NF-kappa-B signaling pathway activation, and hence negatively regulating macrophage-mediated inflammatory response and immune homeostasis. Also induces deubiquitination of the transcription factor HIF1A, probably leading to its stabilization and nuclear import, thereby positively regulating the expression of proangiogenic HIF1A-targeted genes. Involved in a TANK-dependent negative feedback response to attenuate NF-kappaB activation through the deubiquitination of IKBKG or TRAF6 in response to interleukin-1-beta (IL1B) stimulation or upon DNA damage. Prevents stress granules (SGs) formation and promotes macrophage apoptosis under stress conditions, including arsenite-induced oxidative stress, heat shock, and energy deprivation. Plays a role in the regulation of macrophage polarization; promotes IL4-induced polarization of macrophages M1 into anti-inflammatory M2 state. May also act as a transcription factor that regulates the expression of multiple genes involved in inflammatory response, angiogenesis, adipogenesis and apoptosis. Functions as a positive regulator of glial differentiation of neuroprogenitor cells through an amyloid precursor protein (APP)-dependent signaling pathway. Attenuates septic myocardial contractile dysfunction in response to lipopolysaccharide (LPS) by reducing I-kappa-B-kinase (IKK)-mediated NF-kappa-B activation, and hence myocardial pro-inflammatory cytokine production. In Bos taurus (Bovine), this protein is Ribonuclease ZC3H12A.